Consider the following 117-residue polypeptide: Small ribosomal subunit protein bS6 (117 aa).

This sequence belongs to the bacterial ribosomal protein bS6 family.

In terms of biological role, binds together with bS18 to 16S ribosomal RNA. In Roseobacter denitrificans (strain ATCC 33942 / OCh 114) (Erythrobacter sp. (strain OCh 114)), this protein is Small ribosomal subunit protein bS6.